The following is a 396-amino-acid chain: Phosphoglycerate kinase (396 aa).

Substrate-binding positions include Asp-21–Asn-23, Arg-36, His-59–Arg-62, Arg-113, and Arg-146. ATP contacts are provided by residues Lys-197, Glu-319, and Gly-345 to Thr-348.

This sequence belongs to the phosphoglycerate kinase family. As to quaternary structure, monomer.

It localises to the cytoplasm. The catalysed reaction is (2R)-3-phosphoglycerate + ATP = (2R)-3-phospho-glyceroyl phosphate + ADP. The protein operates within carbohydrate degradation; glycolysis; pyruvate from D-glyceraldehyde 3-phosphate: step 2/5. The chain is Phosphoglycerate kinase from Legionella pneumophila (strain Lens).